Here is a 168-residue protein sequence, read N- to C-terminus: Putative adenylate kinase (168 aa).

Gly-10, Gly-12, Lys-13, Thr-14, and Thr-15 together coordinate ATP. The segment at 28 to 51 is NMP; that stretch reads HLNERIREEGLDAGRDEERDSLVA. The segment at 97 to 107 is LID; the sequence is DRGEPAAKAAE. Arg-98 is a binding site for ATP.

The protein belongs to the adenylate kinase family. AK6 subfamily. As to quaternary structure, interacts with uS11. Not a structural component of 40S pre-ribosomes, but transiently interacts with them by binding to uS11.

The catalysed reaction is AMP + ATP = 2 ADP. The enzyme catalyses ATP + H2O = ADP + phosphate + H(+). Functionally, broad-specificity nucleoside monophosphate (NMP) kinase that catalyzes the reversible transfer of the terminal phosphate group between nucleoside triphosphates and monophosphates. Also has ATPase activity. Involved in the late maturation steps of the 30S ribosomal particles, specifically 16S rRNA maturation. While NMP activity is not required for ribosome maturation, ATPase activity is. Associates transiently with small ribosomal subunit protein uS11. ATP hydrolysis breaks the interaction with uS11. May temporarily remove uS11 from the ribosome to enable a conformational change of the ribosomal RNA that is needed for the final maturation step of the small ribosomal subunit. The protein is Putative adenylate kinase of Natronomonas pharaonis (strain ATCC 35678 / DSM 2160 / CIP 103997 / JCM 8858 / NBRC 14720 / NCIMB 2260 / Gabara) (Halobacterium pharaonis).